The sequence spans 659 residues: Pesticidal crystal protein Cry3Ba (659 aa).

Positions 1-41 (MIRMGGRKMNPNNRSEYDTIKVTPNSELPTNHNQYPLADNP) are disordered. A compositionally biased stretch (polar residues) spans 22–41 (VTPNSELPTNHNQYPLADNP).

Belongs to the delta endotoxin family.

Promotes colloidosmotic lysis by binding to the midgut epithelial cells of Coleoptera. The chain is Pesticidal crystal protein Cry3Ba (cry3Ba) from Bacillus thuringiensis subsp. tolworthi.